The primary structure comprises 420 residues: 3-isopropylmalate dehydratase large subunit (420 aa).

The [4Fe-4S] cluster site is built by Cys300, Cys360, and Cys363.

This sequence belongs to the aconitase/IPM isomerase family. LeuC type 2 subfamily. Heterodimer of LeuC and LeuD. It depends on [4Fe-4S] cluster as a cofactor.

It carries out the reaction (2R,3S)-3-isopropylmalate = (2S)-2-isopropylmalate. Its pathway is amino-acid biosynthesis; L-leucine biosynthesis; L-leucine from 3-methyl-2-oxobutanoate: step 2/4. Catalyzes the isomerization between 2-isopropylmalate and 3-isopropylmalate, via the formation of 2-isopropylmaleate. This chain is 3-isopropylmalate dehydratase large subunit, found in Syntrophus aciditrophicus (strain SB).